We begin with the raw amino-acid sequence, 512 residues long: Histidine ammonia-lyase (512 aa).

Residues 143-145 (CSG) constitute a cross-link (5-imidazolinone (Cys-Gly)). Ser144 bears the 2,3-didehydroalanine (Ser) mark.

This sequence belongs to the PAL/histidase family. Contains an active site 4-methylidene-imidazol-5-one (MIO), which is formed autocatalytically by cyclization and dehydration of residues Cys-Ser-Gly.

It localises to the cytoplasm. It carries out the reaction L-histidine = trans-urocanate + NH4(+). Its pathway is amino-acid degradation; L-histidine degradation into L-glutamate; N-formimidoyl-L-glutamate from L-histidine: step 1/3. This chain is Histidine ammonia-lyase, found in Streptomyces coelicolor (strain ATCC BAA-471 / A3(2) / M145).